A 63-amino-acid chain; its full sequence is Cecropin-B (63 aa).

Positions 1–23 (MNFNKIFVFVALILAISLGNSEA) are cleaved as a signal peptide. Arg62 carries the arginine amide modification.

Belongs to the cecropin family. In terms of tissue distribution, strongly expressed in larval, pupal and adult fat body and hemocytes after injection of bacteria. Maximal expression is seen in pupae.

It localises to the secreted. In terms of biological role, cecropins have lytic and antibacterial activity against several Gram-positive and Gram-negative bacteria. In Drosophila melanogaster (Fruit fly), this protein is Cecropin-B (CecB).